Consider the following 406-residue polypeptide: Interactor protein for cytohesin exchange factors 1 (406 aa).

Positions 13–112 (HADCQGWLYK…WLNKLGFAVT (100 aa)) constitute a PH domain. 3 disordered regions span residues 120–173 (DEEC…FSSL), 253–285 (SLNN…EDDE), and 383–406 (PQDP…ENSL). Acidic residues predominate over residues 123 to 134 (CYSESEQEDPEV). A compositionally biased stretch (low complexity) spans 144–153 (ASTTSSPVAA). Residue R164 is modified to Phosphoserine. A compositionally biased stretch (basic and acidic residues) spans 272-285 (MADREEIKSSEDDE). Polar residues predominate over residues 392–406 (EVMNPTSSDCVENSL).

As to quaternary structure, interacts with guanine-nucleotide exchange factors PSCD1, PSCD2, PSCD3 and PSCD4.

The protein resides in the cytoplasm. Its subcellular location is the cell membrane. In terms of biological role, enhances the promotion of guanine-nucleotide exchange by PSCD2 on ARF6 in a concentration-dependent manner. This Mus musculus (Mouse) protein is Interactor protein for cytohesin exchange factors 1 (Ipcef1).